Consider the following 130-residue polypeptide: Protein ApaG (130 aa).

Residues 3-127 (KAETRGISVT…FSLDVPHVRR (125 aa)) enclose the ApaG domain.

The chain is Protein ApaG from Methylobacterium sp. (strain 4-46).